The primary structure comprises 410 residues: LL-diaminopimelate aminotransferase (410 aa).

Residues Tyr-15 and Gly-42 each coordinate substrate. Residues Tyr-72, 108–109 (SK), Tyr-132, Asn-187, Tyr-218, and 246–248 (SFS) each bind pyridoxal 5'-phosphate. Residues Lys-109, Tyr-132, and Asn-187 each contribute to the substrate site. Lys-249 carries the post-translational modification N6-(pyridoxal phosphate)lysine. Pyridoxal 5'-phosphate-binding residues include Arg-257 and Asn-292. Substrate-binding residues include Asn-292 and Arg-388.

It belongs to the class-I pyridoxal-phosphate-dependent aminotransferase family. LL-diaminopimelate aminotransferase subfamily. In terms of assembly, homodimer. Pyridoxal 5'-phosphate serves as cofactor.

It carries out the reaction (2S,6S)-2,6-diaminopimelate + 2-oxoglutarate = (S)-2,3,4,5-tetrahydrodipicolinate + L-glutamate + H2O + H(+). It participates in amino-acid biosynthesis; L-lysine biosynthesis via DAP pathway; LL-2,6-diaminopimelate from (S)-tetrahydrodipicolinate (aminotransferase route): step 1/1. Its function is as follows. Involved in the synthesis of meso-diaminopimelate (m-DAP or DL-DAP), required for both lysine and peptidoglycan biosynthesis. Catalyzes the direct conversion of tetrahydrodipicolinate to LL-diaminopimelate. The protein is LL-diaminopimelate aminotransferase of Geobacter sulfurreducens (strain ATCC 51573 / DSM 12127 / PCA).